Consider the following 1076-residue polypeptide: Bifunctional glutamine synthetase adenylyltransferase/adenylyl-removing enzyme (1076 aa).

Residues 1–521 (MESSIFKPSS…LHLDIYYRPM (521 aa)) form an adenylyl removase region. Residues 524–1076 (VNAQMENDQI…LERNRRRAQR (553 aa)) are adenylyl transferase. Low complexity predominate over residues 1042 to 1056 (TATASAATQQPQTAP). The disordered stretch occupies residues 1042-1076 (TATASAATQQPQTAPRPRMHVIAPRLERNRRRAQR).

This sequence belongs to the GlnE family. Mg(2+) serves as cofactor.

It carries out the reaction [glutamine synthetase]-O(4)-(5'-adenylyl)-L-tyrosine + phosphate = [glutamine synthetase]-L-tyrosine + ADP. The enzyme catalyses [glutamine synthetase]-L-tyrosine + ATP = [glutamine synthetase]-O(4)-(5'-adenylyl)-L-tyrosine + diphosphate. In terms of biological role, involved in the regulation of glutamine synthetase GlnA, a key enzyme in the process to assimilate ammonia. When cellular nitrogen levels are high, the C-terminal adenylyl transferase (AT) inactivates GlnA by covalent transfer of an adenylyl group from ATP to specific tyrosine residue of GlnA, thus reducing its activity. Conversely, when nitrogen levels are low, the N-terminal adenylyl removase (AR) activates GlnA by removing the adenylyl group by phosphorolysis, increasing its activity. The regulatory region of GlnE binds the signal transduction protein PII (GlnB) which indicates the nitrogen status of the cell. This chain is Bifunctional glutamine synthetase adenylyltransferase/adenylyl-removing enzyme, found in Bifidobacterium longum (strain NCC 2705).